The following is a 268-amino-acid chain: Mediator of RNA polymerase II transcription subunit 18 (268 aa).

A disordered region spans residues A91–V112. Over residues Q99 to V112 the composition is skewed to basic and acidic residues.

It belongs to the Mediator complex subunit 18 family. Component of the Mediator complex.

The protein resides in the nucleus. Functionally, component of the Mediator complex, a coactivator involved in the regulated transcription of nearly all RNA polymerase II-dependent genes. Mediator functions as a bridge to convey information from gene-specific regulatory proteins to the basal RNA polymerase II transcription machinery. Mediator is recruited to promoters by direct interactions with regulatory proteins and serves as a scaffold for the assembly of a functional preinitiation complex with RNA polymerase II and the general transcription factors. This is Mediator of RNA polymerase II transcription subunit 18 (srb5) from Aspergillus fumigatus (strain ATCC MYA-4609 / CBS 101355 / FGSC A1100 / Af293) (Neosartorya fumigata).